A 144-amino-acid chain; its full sequence is Pleckstrin homology-like domain family A member 2 (144 aa).

A PH domain is found at 18–111 (ILCEGELEKR…AAITMALIDF (94 aa)). S140 is subject to Phosphoserine.

The protein belongs to the PHLDA2 family. In terms of tissue distribution, specifically expressed at high levels in extraembryonic tissues in the developing conceptus (at protein level). Expressed in placenta and yolc sac. Expressed at low levels in fetal liver and kidney.

The protein resides in the cytoplasm. The protein localises to the membrane. In terms of biological role, plays a role in regulating placenta growth. May act via its PH domain that competes with other PH domain-containing proteins, thereby preventing their binding to membrane lipids. This is Pleckstrin homology-like domain family A member 2 (Phlda2) from Mus musculus (Mouse).